Consider the following 211-residue polypeptide: Endonuclease III (211 aa).

One can recognise a HhH domain in the interval 108–127 (REALEALAGVGRKTANVVLN). [4Fe-4S] cluster is bound by residues Cys187, Cys194, Cys197, and Cys203.

Belongs to the Nth/MutY family. It depends on [4Fe-4S] cluster as a cofactor.

It catalyses the reaction 2'-deoxyribonucleotide-(2'-deoxyribose 5'-phosphate)-2'-deoxyribonucleotide-DNA = a 3'-end 2'-deoxyribonucleotide-(2,3-dehydro-2,3-deoxyribose 5'-phosphate)-DNA + a 5'-end 5'-phospho-2'-deoxyribonucleoside-DNA + H(+). Functionally, DNA repair enzyme that has both DNA N-glycosylase activity and AP-lyase activity. The DNA N-glycosylase activity releases various damaged pyrimidines from DNA by cleaving the N-glycosidic bond, leaving an AP (apurinic/apyrimidinic) site. The AP-lyase activity cleaves the phosphodiester bond 3' to the AP site by a beta-elimination, leaving a 3'-terminal unsaturated sugar and a product with a terminal 5'-phosphate. This is Endonuclease III from Haemophilus influenzae (strain ATCC 51907 / DSM 11121 / KW20 / Rd).